The sequence spans 232 residues: U2 small nuclear ribonucleoprotein B'' (232 aa).

Residues 10–89 (QSIYIQNLNE…KPMRLQYAKA (80 aa)) enclose the RRM 1 domain. The interval 100 to 157 (TFVPKDKKRKQEEKVERKREDSQRPNTANGPSANGPSANNGVPAPSFQPSGQETMPPN) is disordered. A compositionally biased stretch (basic and acidic residues) spans 108 to 122 (RKQEEKVERKREDSQ). 2 stretches are compositionally biased toward polar residues: residues 123 to 139 (RPNT…SANN) and 146 to 156 (FQPSGQETMPP). Positions 158–232 (NILFIQNLPH…NPMVISFAKK (75 aa)) constitute an RRM 2 domain.

This sequence belongs to the RRM U1 A/B'' family. As to quaternary structure, component of the spliceosome where it is associated with snRNP U2.

The protein localises to the nucleus. The protein resides in the cajal body. It localises to the nucleoplasm. Its subcellular location is the cytoplasm. In terms of biological role, involved in nuclear pre-mRNA splicing. The protein is U2 small nuclear ribonucleoprotein B'' (U2B'') of Arabidopsis thaliana (Mouse-ear cress).